The following is a 611-amino-acid chain: Procollagen galactosyltransferase 1-B (611 aa).

A signal peptide spans 1–24 (MSQAGVERLLKGLQILVLVLRLSA). N-linked (GlcNAc...) asparagine glycans are attached at residues Asn-85, Asn-173, Asn-370, Asn-373, and Asn-568. Basic and acidic residues predominate over residues 576 to 591 (DRAKSRKTHQQEKLRS). Residues 576 to 611 (DRAKSRKTHQQEKLRSEALNTPSMGSPFDNTARDEL) form a disordered region. The short motif at 608–611 (RDEL) is the Prevents secretion from ER element.

Belongs to the glycosyltransferase 25 family.

The protein localises to the endoplasmic reticulum lumen. It catalyses the reaction (5R)-5-hydroxy-L-lysyl-[collagen] + UDP-alpha-D-galactose = (5R)-5-O-(beta-D-galactosyl)-5-hydroxy-L-lysyl-[collagen] + UDP + H(+). Beta-galactosyltransferase that transfers beta-galactose to hydroxylysine residues of type I collagen. By acting on collagen glycosylation, facilitates the formation of collagen triple helix. The chain is Procollagen galactosyltransferase 1-B (colgalt1-b) from Xenopus laevis (African clawed frog).